The sequence spans 48 residues: Keratin-associated protein 22-1 (48 aa).

Interacts with hair keratins.

Its function is as follows. In the hair cortex, hair keratin intermediate filaments are embedded in an interfilamentous matrix, consisting of hair keratin-associated proteins (KRTAP), which are essential for the formation of a rigid and resistant hair shaft through their extensive disulfide bond cross-linking with abundant cysteine residues of hair keratins. The matrix proteins include the high-sulfur and high-glycine-tyrosine keratins. This is Keratin-associated protein 22-1 (KRTAP22-1) from Homo sapiens (Human).